The following is a 346-amino-acid chain: Phosphate acyltransferase (346 aa).

The protein belongs to the PlsX family. In terms of assembly, homodimer. Probably interacts with PlsY.

It localises to the cytoplasm. It carries out the reaction a fatty acyl-[ACP] + phosphate = an acyl phosphate + holo-[ACP]. Its pathway is lipid metabolism; phospholipid metabolism. Catalyzes the reversible formation of acyl-phosphate (acyl-PO(4)) from acyl-[acyl-carrier-protein] (acyl-ACP). This enzyme utilizes acyl-ACP as fatty acyl donor, but not acyl-CoA. The polypeptide is Phosphate acyltransferase (Pelobacter propionicus (strain DSM 2379 / NBRC 103807 / OttBd1)).